Here is a 357-residue protein sequence, read N- to C-terminus: Spore wall and anchoring disk complex protein EnP1 (357 aa).

Residues Met1 to Ala16 form the signal peptide. Residue Asn47 is glycosylated (N-linked (GlcNAc...) asparagine). An HBM1 motif is present at residues Glu150–Ile158. Residues Leu329–Gly334 carry the HBM2 motif.

Its subcellular location is the spore wall. The protein resides in the spore. The protein localises to the perispore. Its function is as follows. Spore wall protein involved in the adhesion to host cells surface glycoaminoglycans (GAGs). Microsporidian spore adherence is an integral part of activation and host cell invasion which requires the extrusion at the spore apex of a very long and coiled structure, the polar tube, through which the sporoplasm is pushed to enter into the potential host cell. The polypeptide is Spore wall and anchoring disk complex protein EnP1 (EnP1) (Encephalitozoon cuniculi (strain GB-M1) (Microsporidian parasite)).